The sequence spans 556 residues: Formate--tetrahydrofolate ligase (556 aa).

An ATP-binding site is contributed by 65-72 (TPAGEGKS).

Belongs to the formate--tetrahydrofolate ligase family.

The enzyme catalyses (6S)-5,6,7,8-tetrahydrofolate + formate + ATP = (6R)-10-formyltetrahydrofolate + ADP + phosphate. Its pathway is one-carbon metabolism; tetrahydrofolate interconversion. The chain is Formate--tetrahydrofolate ligase from Clostridium novyi (strain NT).